The sequence spans 140 residues: Nucleoside diphosphate kinase (140 aa).

K11, F59, R87, T93, R104, and N114 together coordinate ATP. H117 serves as the catalytic Pros-phosphohistidine intermediate.

Belongs to the NDK family. In terms of assembly, homotetramer. Mg(2+) serves as cofactor.

It is found in the cytoplasm. It catalyses the reaction a 2'-deoxyribonucleoside 5'-diphosphate + ATP = a 2'-deoxyribonucleoside 5'-triphosphate + ADP. The catalysed reaction is a ribonucleoside 5'-diphosphate + ATP = a ribonucleoside 5'-triphosphate + ADP. In terms of biological role, major role in the synthesis of nucleoside triphosphates other than ATP. The ATP gamma phosphate is transferred to the NDP beta phosphate via a ping-pong mechanism, using a phosphorylated active-site intermediate. The polypeptide is Nucleoside diphosphate kinase (Bartonella henselae (strain ATCC 49882 / DSM 28221 / CCUG 30454 / Houston 1) (Rochalimaea henselae)).